The following is an 87-amino-acid chain: MMMKFINIGYGNMVSAARIITIVSPDSAPIKRIIQDAREKGKLVDATHGRRTRAVIITDSDHVILSSVQPETVANRLYGSDDFSEEG.

The protein belongs to the RemA family.

This is Putative regulatory protein GTNG_1019 from Geobacillus thermodenitrificans (strain NG80-2).